Consider the following 699-residue polypeptide: 4-alpha-glucanotransferase (699 aa).

Belongs to the disproportionating enzyme family.

Its subcellular location is the cytoplasm. The enzyme catalyses Transfers a segment of a (1-&gt;4)-alpha-D-glucan to a new position in an acceptor, which may be glucose or a (1-&gt;4)-alpha-D-glucan.. The chain is 4-alpha-glucanotransferase (malQ) from Haemophilus influenzae (strain ATCC 51907 / DSM 11121 / KW20 / Rd).